Reading from the N-terminus, the 631-residue chain is Phosphomethylpyrimidine synthase (631 aa).

Residues asparagine 239, methionine 268, tyrosine 297, histidine 333, 353–355 (SRG), 394–397 (DGLR), and glutamate 433 each bind substrate. Histidine 437 lines the Zn(2+) pocket. Tyrosine 460 is a binding site for substrate. Residue histidine 501 coordinates Zn(2+). Cysteine 581, cysteine 584, and cysteine 589 together coordinate [4Fe-4S] cluster.

Belongs to the ThiC family. In terms of assembly, homodimer. Requires [4Fe-4S] cluster as cofactor.

The catalysed reaction is 5-amino-1-(5-phospho-beta-D-ribosyl)imidazole + S-adenosyl-L-methionine = 4-amino-2-methyl-5-(phosphooxymethyl)pyrimidine + CO + 5'-deoxyadenosine + formate + L-methionine + 3 H(+). It functions in the pathway cofactor biosynthesis; thiamine diphosphate biosynthesis. Its function is as follows. Catalyzes the synthesis of the hydroxymethylpyrimidine phosphate (HMP-P) moiety of thiamine from aminoimidazole ribotide (AIR) in a radical S-adenosyl-L-methionine (SAM)-dependent reaction. The chain is Phosphomethylpyrimidine synthase from Escherichia coli (strain 55989 / EAEC).